Here is a 460-residue protein sequence, read N- to C-terminus: Argininosuccinate lyase (460 aa).

It belongs to the lyase 1 family. Argininosuccinate lyase subfamily.

It is found in the cytoplasm. It catalyses the reaction 2-(N(omega)-L-arginino)succinate = fumarate + L-arginine. It functions in the pathway amino-acid biosynthesis; L-arginine biosynthesis; L-arginine from L-ornithine and carbamoyl phosphate: step 3/3. The polypeptide is Argininosuccinate lyase (Solibacter usitatus (strain Ellin6076)).